Consider the following 125-residue polypeptide: Fluoride-specific ion channel FluC (125 aa).

Helical transmembrane passes span 4-24 (VIYV…VGIV), 32-52 (FLPW…GLFA), 68-88 (LLIT…LDTV), and 100-120 (AFYV…GLAV). Na(+)-binding residues include Gly-75 and Thr-78.

The protein belongs to the fluoride channel Fluc/FEX (TC 1.A.43) family.

It localises to the cell inner membrane. It catalyses the reaction fluoride(in) = fluoride(out). Its activity is regulated as follows. Na(+) is not transported, but it plays an essential structural role and its presence is essential for fluoride channel function. Fluoride-specific ion channel. Important for reducing fluoride concentration in the cell, thus reducing its toxicity. This chain is Fluoride-specific ion channel FluC, found in Allorhizobium ampelinum (strain ATCC BAA-846 / DSM 112012 / S4) (Agrobacterium vitis (strain S4)).